Reading from the N-terminus, the 336-residue chain is 7,8-didemethyl-8-hydroxy-5-deazariboflavin synthase (336 aa).

The 232-residue stretch at 18–249 folds into the Radical SAM core domain; sequence ITYSPAYTLV…TSIAIQVPPN (232 aa). [4Fe-4S] cluster contacts are provided by cysteine 32, cysteine 36, and cysteine 39.

This sequence belongs to the radical SAM superfamily. CofG family. In terms of assembly, consists of two subunits, CofG and CofH. It depends on [4Fe-4S] cluster as a cofactor.

The catalysed reaction is 5-amino-5-(4-hydroxybenzyl)-6-(D-ribitylimino)-5,6-dihydrouracil + S-adenosyl-L-methionine = 7,8-didemethyl-8-hydroxy-5-deazariboflavin + 5'-deoxyadenosine + L-methionine + NH4(+) + H(+). It participates in cofactor biosynthesis; coenzyme F0 biosynthesis. In terms of biological role, catalyzes the radical-mediated synthesis of 7,8-didemethyl-8-hydroxy-5-deazariboflavin from 5-amino-5-(4-hydroxybenzyl)-6-(D-ribitylimino)-5,6-dihydrouracil. This is 7,8-didemethyl-8-hydroxy-5-deazariboflavin synthase from Synechococcus elongatus (strain ATCC 33912 / PCC 7942 / FACHB-805) (Anacystis nidulans R2).